The sequence spans 252 residues: Thiazole synthase (252 aa).

Residue Lys-91 is the Schiff-base intermediate with DXP of the active site. Residues Gly-152, 179–180, and 201–202 contribute to the 1-deoxy-D-xylulose 5-phosphate site; these read AG and NT.

This sequence belongs to the ThiG family. Homotetramer. Forms heterodimers with either ThiH or ThiS.

Its subcellular location is the cytoplasm. It catalyses the reaction [ThiS sulfur-carrier protein]-C-terminal-Gly-aminoethanethioate + 2-iminoacetate + 1-deoxy-D-xylulose 5-phosphate = [ThiS sulfur-carrier protein]-C-terminal Gly-Gly + 2-[(2R,5Z)-2-carboxy-4-methylthiazol-5(2H)-ylidene]ethyl phosphate + 2 H2O + H(+). It functions in the pathway cofactor biosynthesis; thiamine diphosphate biosynthesis. Catalyzes the rearrangement of 1-deoxy-D-xylulose 5-phosphate (DXP) to produce the thiazole phosphate moiety of thiamine. Sulfur is provided by the thiocarboxylate moiety of the carrier protein ThiS. In vitro, sulfur can be provided by H(2)S. The chain is Thiazole synthase from Erwinia amylovora (Fire blight bacteria).